A 670-amino-acid chain; its full sequence is Aurofusarin cluster transcription factor aurR2 (670 aa).

The zn(2)-C6 fungal-type DNA-binding region spans Cys12–Cys38. Disordered stretches follow at residues Arg57–Gly76 and Gly92–Thr115. Positions Gly92–Thr113 are enriched in basic and acidic residues.

It is found in the nucleus. Functionally, transcription factor that may participate in the regulation of the expression of the gene cluster that mediates the biosynthesis of aurofusarin, a red mycelium pigment which is acting as a mycotoxin. The sequence is that of Aurofusarin cluster transcription factor aurR2 from Gibberella zeae (strain ATCC MYA-4620 / CBS 123657 / FGSC 9075 / NRRL 31084 / PH-1) (Wheat head blight fungus).